The following is a 63-amino-acid chain: Protein DsrB (63 aa).

The protein belongs to the DsrB family.

The chain is Protein DsrB from Yersinia enterocolitica serotype O:8 / biotype 1B (strain NCTC 13174 / 8081).